The primary structure comprises 712 residues: Sesterterpene synthase btcA (712 aa).

A terpene cyclase region spans residues 1-332; it reads MTTIWEHCVD…CANCPRHHAW (332 aa). A Mg(2+)-binding site is contributed by aspartate 96. Substrate is bound by residues aspartate 96, asparagine 234, 238–242, and 328–329; these read SWDRE and RH. Positions 96-100 match the DDXXD 1 motif; sequence DDLCD. An NSE/DTE motif is present at residues 234–242; it reads NDYWSWDRE. A prenyltransferase region spans residues 333–706; it reads RDEESSPSER…VMRIVLSRLS (374 aa). The disordered stretch occupies residues 334–373; it reads DEESSPSERSFSPSNEGIEDPRLSPGASTTSSMSQKSSPA. Composition is skewed to low complexity over residues 340-349 and 361-373; these read SERSFSPSNE and STTS…SSPA. Isopentenyl diphosphate contacts are provided by lysine 414, arginine 417, and histidine 446. The Mg(2+) site is built by aspartate 453 and aspartate 457. Residues 453–457 carry the DDXXD 2 motif; it reads DDIED. Dimethylallyl diphosphate is bound at residue arginine 462. Arginine 463 contacts isopentenyl diphosphate. Dimethylallyl diphosphate-binding residues include lysine 540, threonine 541, glutamine 580, asparagine 587, lysine 597, and lysine 607.

In the N-terminal section; belongs to the terpene synthase family. This sequence in the C-terminal section; belongs to the FPP/GGPP synthase family. In terms of assembly, hexamer. It depends on Mg(2+) as a cofactor.

The enzyme catalyses isopentenyl diphosphate + (2E,6E)-farnesyl diphosphate = (2E,6E,10E)-geranylgeranyl diphosphate + diphosphate. It catalyses the reaction isopentenyl diphosphate + (2E,6E,10E)-geranylgeranyl diphosphate = (2E,6E,10E,14E)-geranylfarnesyl diphosphate + diphosphate. Its pathway is secondary metabolite biosynthesis; terpenoid biosynthesis. Its function is as follows. Bifunctional terpene synthase; part of the gene cluster that mediates the biosynthesis of betaestacins. The bifunctional terpene synthase btcA converts isopentenyl diphosphate (IPP) and dimethylallyl diphosphate (DMAPP) into the sesterterpene betaestacin I. The C-terminal prenyltransferase (PT) domain of btcA catalyzes formation of GFPP, whereas the N-terminal terpene cyclase (TC) domain catalyzes the cyclization of GFPP into betaestacin I. The cytochrome P450 monooxygenase btcB oxidizes the C25 methyl group of betaestacin I to yield the carboxylic acid betaestacin IV via the alcohol betaestacin III. The cytochrome P450 monooxygenase btcC further catalyzes the multistep oxidation of betaestacin IV to produce several compounds, including betaestacins Va, Vb, Vc and VI. In Colletotrichum orbiculare (strain 104-T / ATCC 96160 / CBS 514.97 / LARS 414 / MAFF 240422) (Cucumber anthracnose fungus), this protein is Sesterterpene synthase btcA.